The following is a 474-amino-acid chain: Glutamate--tRNA ligase (474 aa).

Residues 9 to 19 (PSPTGYLHVGG) carry the 'HIGH' region motif. A 'KMSKS' region motif is present at residues 240 to 244 (KLSKR). Position 243 (K243) interacts with ATP.

Belongs to the class-I aminoacyl-tRNA synthetase family. Glutamate--tRNA ligase type 1 subfamily. As to quaternary structure, monomer.

It localises to the cytoplasm. It catalyses the reaction tRNA(Glu) + L-glutamate + ATP = L-glutamyl-tRNA(Glu) + AMP + diphosphate. Catalyzes the attachment of glutamate to tRNA(Glu) in a two-step reaction: glutamate is first activated by ATP to form Glu-AMP and then transferred to the acceptor end of tRNA(Glu). The protein is Glutamate--tRNA ligase of Vibrio vulnificus (strain YJ016).